Consider the following 21-residue polypeptide: Mast cell protease 3 (21 aa).

One can recognise a Peptidase S1 domain in the interval 1–21; the sequence is IIGGVESRPHSRPYMATLEIT. The segment at 1–21 is disordered; that stretch reads IIGGVESRPHSRPYMATLEIT.

It belongs to the peptidase S1 family. Granzyme subfamily.

Its function is as follows. Thrombin inactivating protease. Displays chymotrypsin-like substrate specificity. The chain is Mast cell protease 3 (Mcpt3) from Mus musculus (Mouse).